We begin with the raw amino-acid sequence, 188 residues long: Peptidyl-tRNA hydrolase (188 aa).

Residue Y15 coordinates tRNA. H20 functions as the Proton acceptor in the catalytic mechanism. TRNA is bound by residues F63, N65, and N111.

The protein belongs to the PTH family. Monomer.

It localises to the cytoplasm. The catalysed reaction is an N-acyl-L-alpha-aminoacyl-tRNA + H2O = an N-acyl-L-amino acid + a tRNA + H(+). Functionally, hydrolyzes ribosome-free peptidyl-tRNAs (with 1 or more amino acids incorporated), which drop off the ribosome during protein synthesis, or as a result of ribosome stalling. In terms of biological role, catalyzes the release of premature peptidyl moieties from peptidyl-tRNA molecules trapped in stalled 50S ribosomal subunits, and thus maintains levels of free tRNAs and 50S ribosomes. The sequence is that of Peptidyl-tRNA hydrolase from Hydrogenobaculum sp. (strain Y04AAS1).